Here is a 741-residue protein sequence, read N- to C-terminus: Cellulose 1,4-beta-cellobiosidase (reducing end) CelS (741 aa).

Positions 1 to 27 (MVKSRKISILLAVAMLVSIMIPTTAFA) are cleaved as a signal peptide. E76 lines the substrate pocket. The active-site Proton donor is the E87. Residues T140, N204, D241, Q247, and 251–252 (TN) contribute to the substrate site. D255 serves as the catalytic Nucleophile. Residues 301 to 302 (KY), 326 to 327 (WY), Y421, D520, and 645 to 646 (WH) each bind substrate. The 67-residue stretch at 673 to 739 (STKLYGDVND…ILKEIDTLPY (67 aa)) folds into the Dockerin domain. Ca(2+) contacts are provided by D679, N681, D683, G684, K685, D690, D711, L712, N713, D715, R717, and D722.

Belongs to the glycosyl hydrolase 48 (cellulase L) family.

The protein localises to the secreted. It catalyses the reaction Hydrolysis of (1-&gt;4)-beta-D-glucosidic linkages in cellulose and similar substrates, releasing cellobiose from the reducing ends of the chains.. With respect to regulation, inhibited by cellobiose and lactose, but not by glucose. Functionally, this enzyme catalyzes the exohydrolysis of 1,4-beta-glucosidic linkages in cellulose with a preference for amorphous or crystalline cellulose over carboxymethyl cellulose. The polypeptide is Cellulose 1,4-beta-cellobiosidase (reducing end) CelS (celS) (Acetivibrio thermocellus (strain ATCC 27405 / DSM 1237 / JCM 9322 / NBRC 103400 / NCIMB 10682 / NRRL B-4536 / VPI 7372) (Clostridium thermocellum)).